An 82-amino-acid polypeptide reads, in one-letter code: MKLTCMMIAAVLFLTTWTFVTADDSRYGLKNLFPKARHEMKNPEASKLNKREGCSSGGTFCGIHPGLCCSEFCFLWCITFID.

An N-terminal signal peptide occupies residues 1-22; the sequence is MKLTCMMIAAVLFLTTWTFVTA. The propeptide occupies 23-51; it reads DDSRYGLKNLFPKARHEMKNPEASKLNKR. 3 disulfide bridges follow: cysteine 54–cysteine 69, cysteine 61–cysteine 73, and cysteine 68–cysteine 77.

Belongs to the conotoxin O1 superfamily. In terms of tissue distribution, expressed by the venom duct.

It is found in the secreted. Its function is as follows. Omega-conotoxins act at presynaptic membranes, they bind and block voltage-gated calcium channels (Cav). In Conus striatus (Striated cone), this protein is Omega-conotoxin-like 9.